We begin with the raw amino-acid sequence, 705 residues long: Glycine--tRNA ligase beta subunit (705 aa).

Belongs to the class-II aminoacyl-tRNA synthetase family. Tetramer of two alpha and two beta subunits.

The protein resides in the cytoplasm. It catalyses the reaction tRNA(Gly) + glycine + ATP = glycyl-tRNA(Gly) + AMP + diphosphate. The sequence is that of Glycine--tRNA ligase beta subunit from Persephonella marina (strain DSM 14350 / EX-H1).